The following is a 325-amino-acid chain: MTAHWKENHKNLMLFSGRAHPELAEAVARDLEVEVTPMTARDFANGEIYVRFEESVRGSDCFVIQSHTQPLNKWLMEQLLMIDALKRGSAKRITAILPFYPYARQDKKHRGREPISARLIADLLQTAGADRIVSVDLHTDQIQGFFDGPVDHMHAMPILTDYIKDKYDLSNIVVVSPDAGRVKVAEKWANTLGDAPMAFVHKTRSTEVANEVVANRVVGDVAGKDCVLLDDMIDTGGTIAGAVGVLKEAGARSVVIACTHGVFSDPARERLSSCGAEEVITTDTLPQSTEGWSNLTVLPIAPLLARTISEIFENGSVTTLFEGDA.

Residues 45–47 (NGE) and 104–105 (RQ) contribute to the ATP site. His138 and Asp178 together coordinate Mg(2+). The active site involves Lys202. D-ribose 5-phosphate contacts are provided by residues Arg204, Asp230, and 234 to 238 (DTGGT).

This sequence belongs to the ribose-phosphate pyrophosphokinase family. Class I subfamily. As to quaternary structure, homohexamer. It depends on Mg(2+) as a cofactor.

Its subcellular location is the cytoplasm. The catalysed reaction is D-ribose 5-phosphate + ATP = 5-phospho-alpha-D-ribose 1-diphosphate + AMP + H(+). The protein operates within metabolic intermediate biosynthesis; 5-phospho-alpha-D-ribose 1-diphosphate biosynthesis; 5-phospho-alpha-D-ribose 1-diphosphate from D-ribose 5-phosphate (route I): step 1/1. Its function is as follows. Involved in the biosynthesis of the central metabolite phospho-alpha-D-ribosyl-1-pyrophosphate (PRPP) via the transfer of pyrophosphoryl group from ATP to 1-hydroxyl of ribose-5-phosphate (Rib-5-P). The protein is Ribose-phosphate pyrophosphokinase of Corynebacterium efficiens (strain DSM 44549 / YS-314 / AJ 12310 / JCM 11189 / NBRC 100395).